A 476-amino-acid chain; its full sequence is Undecaprenyl-phosphate galactose phosphotransferase (476 aa).

The next 5 helical transmembrane spans lie at 15-35, 52-72, 93-113, 115-135, and 283-303; these read IFLA…SLGC, LDTR…WFWI, TIVI…WQFS, YVWV…RALT, and FDIV…IYLW. Residues 304–476 lie on the Cytoplasmic side of the membrane; sequence YKVTRDGGPA…KVVLRRDGAY (173 aa).

This sequence belongs to the bacterial sugar transferase family.

It localises to the cell inner membrane. The enzyme catalyses di-trans,octa-cis-undecaprenyl phosphate + UDP-alpha-D-galactose = alpha-D-galactosyl-di-trans,octa-cis-undecaprenyl diphosphate + UMP. The protein operates within bacterial outer membrane biogenesis; LPS O-antigen biosynthesis. Is responsible for transferring galactose-1-phosphate to the lipid precursor undecaprenol phosphate in the first steps of O-polysaccharide biosynthesis. This chain is Undecaprenyl-phosphate galactose phosphotransferase (rfbP), found in Salmonella typhimurium (strain LT2 / SGSC1412 / ATCC 700720).